A 273-amino-acid polypeptide reads, in one-letter code: Galactose-binding lectin (273 aa).

The N-terminal stretch at 1–23 (MKPFCVFLTFFLLLAASSKKVDS) is a signal peptide. Mn(2+)-binding residues include E144 and D146. The Ca(2+) site is built by D146, Y148, N150, and D155. Mn(2+)-binding residues include D155 and H160.

It belongs to the leguminous lectin family. As to quaternary structure, homotetramer.

In terms of biological role, D-galactose specific lectin. The chain is Galactose-binding lectin from Arachis hypogaea (Peanut).